Consider the following 41-residue polypeptide: Pi-stichotoxin-Hmg5c (41 aa).

3 disulfides stabilise this stretch: cysteine 4/cysteine 37, cysteine 6/cysteine 30, and cysteine 20/cysteine 38.

It belongs to the sea anemone type 3 (BDS) potassium channel toxin family.

It is found in the secreted. The protein resides in the nematocyst. In terms of biological role, toxin with different activities on acid-sensing ion channels (ASIC) and nicotinic acetylcholine receptors. Is able to bind T.californica muscle-type nicotinic acetylcholine receptors (nAChR) (alpha-1-beta-1-delta-epsilon (CHRNA1-CHRNB1-CHRND-CHRNE)), and human alpha-7/CHRNA7 nicotinic acetylcholine receptors. Weakly and reversibly inhibits rat homomeric ASIC1 (isoform ASIC1a) (IC(50)=1.25 uM), while it potentiates rat homomeric ASIC3 (EC(50)=1.53 uM). Rat ASIC1a current inhibition is not complete, and reaches a maximum of 86% inhibition. On rat ASIC3, does not activate the channel itself, but produces a remarkable potentiation of the transient current resulting from the acidic pulse. At the maximal applied concentration, elicits responses that are twice as high as those produced by extracellular protons. Surprisingly, shows a different activity on human ASIC3. On the truncated human ASIC3 (ASIC3-D20), the toxin weakly inhibits the channel. Molecular modeling interaction with rat ASIC1a suggests that it hinders the collapse of acidic pockets and stabilizes nonconducting channels state. In vivo, causes an anxiolytic effect on mouse behavior. Also shows an analgesic activity in an acid-induced muscle pain model, and important anti-inflammatory effect in models of acute local inflammation. The sequence is that of Pi-stichotoxin-Hmg5c from Heteractis magnifica (Magnificent sea anemone).